The primary structure comprises 358 residues: Peptide chain release factor 1 (358 aa).

Gln-233 is modified (N5-methylglutamine).

This sequence belongs to the prokaryotic/mitochondrial release factor family. Post-translationally, methylated by PrmC. Methylation increases the termination efficiency of RF1.

It localises to the cytoplasm. In terms of biological role, peptide chain release factor 1 directs the termination of translation in response to the peptide chain termination codons UAG and UAA. The protein is Peptide chain release factor 1 of Beijerinckia indica subsp. indica (strain ATCC 9039 / DSM 1715 / NCIMB 8712).